A 455-amino-acid polypeptide reads, in one-letter code: Glutamyl-tRNA reductase (455 aa).

Substrate is bound by residues 49 to 52 (TCNR), serine 109, 114 to 116 (ETQ), and glutamine 120. The Nucleophile role is filled by cysteine 50. 189 to 194 (GAGKMG) serves as a coordination point for NADP(+).

The protein belongs to the glutamyl-tRNA reductase family. Homodimer.

It catalyses the reaction (S)-4-amino-5-oxopentanoate + tRNA(Glu) + NADP(+) = L-glutamyl-tRNA(Glu) + NADPH + H(+). It functions in the pathway porphyrin-containing compound metabolism; protoporphyrin-IX biosynthesis; 5-aminolevulinate from L-glutamyl-tRNA(Glu): step 1/2. Its function is as follows. Catalyzes the NADPH-dependent reduction of glutamyl-tRNA(Glu) to glutamate 1-semialdehyde (GSA). In Bacillus velezensis (strain DSM 23117 / BGSC 10A6 / LMG 26770 / FZB42) (Bacillus amyloliquefaciens subsp. plantarum), this protein is Glutamyl-tRNA reductase.